Reading from the N-terminus, the 211-residue chain is Thiamine-phosphate synthase (211 aa).

4-amino-2-methyl-5-(diphosphooxymethyl)pyrimidine contacts are provided by residues 36–40 (QLRDK) and Asn-68. 2 residues coordinate Mg(2+): Asp-69 and Asp-88. Ser-107 provides a ligand contact to 4-amino-2-methyl-5-(diphosphooxymethyl)pyrimidine. 2-[(2R,5Z)-2-carboxy-4-methylthiazol-5(2H)-ylidene]ethyl phosphate is bound at residue 133-135 (TKS). Lys-136 is a binding site for 4-amino-2-methyl-5-(diphosphooxymethyl)pyrimidine. 2-[(2R,5Z)-2-carboxy-4-methylthiazol-5(2H)-ylidene]ethyl phosphate is bound by residues Gly-164 and 184–185 (IS).

It belongs to the thiamine-phosphate synthase family. It depends on Mg(2+) as a cofactor.

It catalyses the reaction 2-[(2R,5Z)-2-carboxy-4-methylthiazol-5(2H)-ylidene]ethyl phosphate + 4-amino-2-methyl-5-(diphosphooxymethyl)pyrimidine + 2 H(+) = thiamine phosphate + CO2 + diphosphate. The catalysed reaction is 2-(2-carboxy-4-methylthiazol-5-yl)ethyl phosphate + 4-amino-2-methyl-5-(diphosphooxymethyl)pyrimidine + 2 H(+) = thiamine phosphate + CO2 + diphosphate. The enzyme catalyses 4-methyl-5-(2-phosphooxyethyl)-thiazole + 4-amino-2-methyl-5-(diphosphooxymethyl)pyrimidine + H(+) = thiamine phosphate + diphosphate. The protein operates within cofactor biosynthesis; thiamine diphosphate biosynthesis; thiamine phosphate from 4-amino-2-methyl-5-diphosphomethylpyrimidine and 4-methyl-5-(2-phosphoethyl)-thiazole: step 1/1. Condenses 4-methyl-5-(beta-hydroxyethyl)thiazole monophosphate (THZ-P) and 2-methyl-4-amino-5-hydroxymethyl pyrimidine pyrophosphate (HMP-PP) to form thiamine monophosphate (TMP). This chain is Thiamine-phosphate synthase, found in Halalkalibacterium halodurans (strain ATCC BAA-125 / DSM 18197 / FERM 7344 / JCM 9153 / C-125) (Bacillus halodurans).